The primary structure comprises 368 residues: uncharacterized protein (368 aa).

Its function is as follows. Might be involved in sporulation. This is an uncharacterized protein from Brachyspira hyodysenteriae (strain ATCC 49526 / WA1).